Reading from the N-terminus, the 149-residue chain is Glucosamine 6-phosphate N-acetyltransferase (149 aa).

The N-acetyltransferase domain maps to 5 to 149 (FKIRKLEISD…KSIQMSKYFD (145 aa)). Substrate contacts are provided by residues T27, 75–78 (KFLR), and 87–89 (EDV). Residue 97-102 (GKQLGK) participates in acetyl-CoA binding. Residue 118–119 (YK) coordinates substrate. 132–134 (YEK) serves as a coordination point for acetyl-CoA.

This sequence belongs to the acetyltransferase family. GNA1 subfamily. In terms of assembly, homodimer. Expressed in roots, leaves, stems, cauline leaves, flowers and siliques.

The protein localises to the endoplasmic reticulum membrane. The enzyme catalyses D-glucosamine 6-phosphate + acetyl-CoA = N-acetyl-D-glucosamine 6-phosphate + CoA + H(+). The protein operates within nucleotide-sugar biosynthesis; UDP-N-acetyl-alpha-D-glucosamine biosynthesis; N-acetyl-alpha-D-glucosamine 1-phosphate from alpha-D-glucosamine 6-phosphate (route I): step 1/2. In terms of biological role, acetyltransferase involved in UDP-N-acetylglucosamine (UDP-GlcNAc) biosynthesis. UDP-GlcNAc is an essential metabolite that serves as an initial sugar donor for N-glycan synthesis and thus plays an important role in protein and lipid glycosylation. This Arabidopsis thaliana (Mouse-ear cress) protein is Glucosamine 6-phosphate N-acetyltransferase (GNA1).